We begin with the raw amino-acid sequence, 882 residues long: Valine--tRNA ligase (882 aa).

Positions 45-55 match the 'HIGH' region motif; it reads PNVTGKLHLGH. Positions 519–523 match the 'KMSKS' region motif; that stretch reads KMSKS. Lysine 522 is an ATP binding site. Residues 808 to 882 adopt a coiled-coil conformation; the sequence is LADLLNVEEE…RIAEMKKIKS (75 aa).

The protein belongs to the class-I aminoacyl-tRNA synthetase family. ValS type 1 subfamily. In terms of assembly, monomer.

It is found in the cytoplasm. It carries out the reaction tRNA(Val) + L-valine + ATP = L-valyl-tRNA(Val) + AMP + diphosphate. Catalyzes the attachment of valine to tRNA(Val). As ValRS can inadvertently accommodate and process structurally similar amino acids such as threonine, to avoid such errors, it has a 'posttransfer' editing activity that hydrolyzes mischarged Thr-tRNA(Val) in a tRNA-dependent manner. The chain is Valine--tRNA ligase from Streptococcus pyogenes serotype M28 (strain MGAS6180).